A 258-amino-acid polypeptide reads, in one-letter code: Synapse differentiation-inducing gene protein 1-like (258 aa).

Over 1-182 (MESLSELQNP…FIVIPPRDHL (182 aa)) the chain is Extracellular. The chain crosses the membrane as a helical span at residues 183–203 (GLAIFSMLCCFWPLGIAAFYF). Topologically, residues 204-228 (SQGTSKAVTKGDFPLASIASRRALF) are cytoplasmic. The chain crosses the membrane as a helical span at residues 229 to 249 (LAALSITIGTGVYVGVVVALI). The Extracellular segment spans residues 250-258 (AYLSKPGHI).

Belongs to the CD225/Dispanin family.

The protein resides in the membrane. It localises to the golgi apparatus. It is found in the cis-Golgi network. This is Synapse differentiation-inducing gene protein 1-like (syndig1l) from Danio rerio (Zebrafish).